The primary structure comprises 122 residues: Large ribosomal subunit protein uL14c (122 aa).

This sequence belongs to the universal ribosomal protein uL14 family. In terms of assembly, part of the 50S ribosomal subunit.

The protein resides in the plastid. It localises to the chloroplast. Functionally, binds to 23S rRNA. The chain is Large ribosomal subunit protein uL14c from Mesostigma viride (Green alga).